Here is a 190-residue protein sequence, read N- to C-terminus: Peptide deformylase (190 aa).

Residues cysteine 94 and histidine 136 each coordinate Fe cation. Glutamate 137 is a catalytic residue. Residue histidine 140 participates in Fe cation binding.

This sequence belongs to the polypeptide deformylase family. Fe(2+) serves as cofactor.

It catalyses the reaction N-terminal N-formyl-L-methionyl-[peptide] + H2O = N-terminal L-methionyl-[peptide] + formate. Its function is as follows. Removes the formyl group from the N-terminal Met of newly synthesized proteins. Requires at least a dipeptide for an efficient rate of reaction. N-terminal L-methionine is a prerequisite for activity but the enzyme has broad specificity at other positions. The chain is Peptide deformylase from Chlorobium phaeovibrioides (strain DSM 265 / 1930) (Prosthecochloris vibrioformis (strain DSM 265)).